The sequence spans 249 residues: tRNA pseudouridine synthase A (249 aa).

Aspartate 53 (nucleophile) is an active-site residue. Position 111 (tyrosine 111) interacts with substrate.

The protein belongs to the tRNA pseudouridine synthase TruA family. In terms of assembly, homodimer.

The catalysed reaction is uridine(38/39/40) in tRNA = pseudouridine(38/39/40) in tRNA. Formation of pseudouridine at positions 38, 39 and 40 in the anticodon stem and loop of transfer RNAs. In Streptococcus pneumoniae (strain Taiwan19F-14), this protein is tRNA pseudouridine synthase A.